The primary structure comprises 406 residues: MKIGKKILIMLVTIFLTSLVALGVYATSIYNFSLGEFSKTFKDYGTGSGKDVIADEKPFSILLMGVDTGSSERTSKWEGNSDSMILVTVNPKTKKTTMTSLERDILVKLSGSKTNDQTGYDAKLNAAYAAGGAKMAIMTVQDMLDIKIDKYVQINMEGLVQLVDAVGGITVTNHFDFPISIEEHEPEFTASVEPGTHKINGEQALVYSRMRYDDPDGDYGRQKRQREVISKVLKKILALDSVSKYRKILSAVSKNMQTNIEISSSTIPKLLGYSDALKSIRTYQLKGEGTTIDGGSYQLVTSKELLKAQNRIKGQLGLKKSTAENLKTTASLYENFYGGDTSIYDSSSSASDYSSSGNYSGSSSDYGSSSSYGSNSSSGSSSDYSGQNSYNQGNYQQPAAGTGIGN.

The signal sequence occupies residues 1–26 (MKIGKKILIMLVTIFLTSLVALGVYA). A compositionally biased stretch (low complexity) spans 347-397 (SSSASDYSSSGNYSGSSSDYGSSSSYGSNSSSGSSSDYSGQNSYNQGNYQQ). The tract at residues 347-406 (SSSASDYSSSGNYSGSSSDYGSSSSYGSNSSSGSSSDYSGQNSYNQGNYQQPAAGTGIGN) is disordered.

Belongs to the LytR/CpsA/Psr (LCP) family.

The protein resides in the cell envelope. Functionally, involved in biofilm formation, cell division, autolysis and the regulation of acid and oxidative stress tolerance. May be associated with systemic virulence in blood. In Streptococcus mutans serotype c (strain ATCC 700610 / UA159), this protein is Biofilm regulatory protein A (brpA).